Reading from the N-terminus, the 170-residue chain is Large ribosomal subunit protein uL10 (170 aa).

It belongs to the universal ribosomal protein uL10 family. Part of the ribosomal stalk of the 50S ribosomal subunit. The N-terminus interacts with L11 and the large rRNA to form the base of the stalk. The C-terminus forms an elongated spine to which L12 dimers bind in a sequential fashion forming a multimeric L10(L12)X complex.

Its function is as follows. Forms part of the ribosomal stalk, playing a central role in the interaction of the ribosome with GTP-bound translation factors. The sequence is that of Large ribosomal subunit protein uL10 from Novosphingobium aromaticivorans (strain ATCC 700278 / DSM 12444 / CCUG 56034 / CIP 105152 / NBRC 16084 / F199).